We begin with the raw amino-acid sequence, 318 residues long: MARPKVEAGVKLRGAEKVARIPVKIIPTVDLPKKPDWIRVRIPVSPEVDRIKQLLRKHKLHSVCEEASCPNLGECFSGGTATFMIMGDICTRRCPFCDVGHGRPKALDADEPKSLAIAIADLRLKYVVITSVDRDDLRDGGAQHFADCIREIRLLSPGIQLETLVPDYRGRMDVALEITAAEPPDVFNHNLETVPRLYKAARPGSDYQWSLTLLQRFKQMVPHVPTKSGLMLGLGETDEEVIEVMKRMREHDIDMLTLGQYLQPSRNHLAVQRFVHPDTFAWFAEEGYKMGFKNVASGPLVRSSYHADEQAKIAKAML.

[4Fe-4S] cluster-binding residues include Cys-64, Cys-69, Cys-75, Cys-90, Cys-94, Cys-97, and Ser-304. Positions Phe-76–Lys-293 constitute a Radical SAM core domain.

The protein belongs to the radical SAM superfamily. Lipoyl synthase family. The cofactor is [4Fe-4S] cluster.

It localises to the cytoplasm. It catalyses the reaction [[Fe-S] cluster scaffold protein carrying a second [4Fe-4S](2+) cluster] + N(6)-octanoyl-L-lysyl-[protein] + 2 oxidized [2Fe-2S]-[ferredoxin] + 2 S-adenosyl-L-methionine + 4 H(+) = [[Fe-S] cluster scaffold protein] + N(6)-[(R)-dihydrolipoyl]-L-lysyl-[protein] + 4 Fe(3+) + 2 hydrogen sulfide + 2 5'-deoxyadenosine + 2 L-methionine + 2 reduced [2Fe-2S]-[ferredoxin]. It functions in the pathway protein modification; protein lipoylation via endogenous pathway; protein N(6)-(lipoyl)lysine from octanoyl-[acyl-carrier-protein]: step 2/2. Its function is as follows. Catalyzes the radical-mediated insertion of two sulfur atoms into the C-6 and C-8 positions of the octanoyl moiety bound to the lipoyl domains of lipoate-dependent enzymes, thereby converting the octanoylated domains into lipoylated derivatives. The sequence is that of Lipoyl synthase from Pseudomonas syringae pv. tomato (strain ATCC BAA-871 / DC3000).